A 499-amino-acid chain; its full sequence is MKAEFVRILPHMFNLFLAVFPEIFIINATFILLIHGVVFSTSKKYDYPPLASNVGWLGLLSVLITLLLLAAGAPLLTIAHLFWNNLFRRDNFTYFCQIFLLLSTAGTISMCFDFFDQERFDAFEFIVLILLSTCGMLFMISAYDLIAMYLAIELQSLCFYVIAASKRKSEFSTEAGLKYLILGAFSSGILLFPCSMIYGSTGATHFDQLAKILTGYEITGARSSGIFMGILFIAVGFLFKITAVPFHMWAPDIYEGSPTPVTAFLSIAPKISIFANILRVFIYGSYGATLQQIFFFCSIASMILGALAAMAQTKVKRLLAYSSIGHVGYICIGFSCGTIEGIQSLLIGIFIYALMTMDAFAIVLALRQTRVKYIADLGALAKTNPILAITFSITMFSYAGIPPLAGFCSKFYLFFAALGCGAYFLALVGVVTSVIGCFYYIRLVKRMFFDTPRTWILYEPMDRNKSLLLAMTSFFITLFLLYPSPLFSVTHQMALSLYL.

14 consecutive transmembrane segments (helical) span residues 15–35 (LFLA…LLIH), 56–76 (WLGL…APLL), 95–115 (FCQI…FDFF), 122–142 (AFEF…MISA), 145–165 (LIAM…IAAS), 179–199 (YLIL…MIYG), 226–246 (IFMG…AVPF), 263–283 (AFLS…VFIY), 293–313 (IFFF…MAQT), 319–339 (LAYS…CGTI), 345–365 (LLIG…IVLA), 386–406 (ILAI…PLAG), 411–431 (FYLF…VGVV), and 467–487 (LLLA…SPLF).

As to quaternary structure, complex I is composed of at least 49 different subunits.

The protein localises to the mitochondrion inner membrane. The catalysed reaction is a ubiquinone + NADH + 5 H(+)(in) = a ubiquinol + NAD(+) + 4 H(+)(out). In terms of biological role, core subunit of the mitochondrial membrane respiratory chain NADH dehydrogenase (Complex I) that is believed to belong to the minimal assembly required for catalysis. Complex I functions in the transfer of electrons from NADH to the respiratory chain. The immediate electron acceptor for the enzyme is believed to be ubiquinone. The sequence is that of NADH-ubiquinone oxidoreductase chain 2 (ND2) from Arabidopsis thaliana (Mouse-ear cress).